We begin with the raw amino-acid sequence, 99 residues long: Large ribosomal subunit protein uL23 (99 aa).

It belongs to the universal ribosomal protein uL23 family. In terms of assembly, part of the 50S ribosomal subunit. Contacts protein L29, and trigger factor when it is bound to the ribosome.

Its function is as follows. One of the early assembly proteins it binds 23S rRNA. One of the proteins that surrounds the polypeptide exit tunnel on the outside of the ribosome. Forms the main docking site for trigger factor binding to the ribosome. The sequence is that of Large ribosomal subunit protein uL23 from Rhodopseudomonas palustris (strain HaA2).